Here is a 335-residue protein sequence, read N- to C-terminus: MDKINAVITGVGGYVPDYVLTNDEISKMVDTTDEWIMGRIGIKERHILNEEGLGTSYMARKAAKQLMQRTKSRPDDIDLVIVATTTSDYRFPSTASILCERLGLKNAFAFDMQAVCSGFLYAMETGANFIRSGKYKKIIIVGADKMSSVIDYTDRATCPIFGDGAAAFMLEPTTEEVGIMDSVLRTDGKGLPFLHIKAGGSVCPPSYYSLDHHLHYIYQEGRTVFKYAVANMSDSCEAIIARNHLTKEEVDWVIPHQANQRIITAVAQRLEVPSEKVMVNIERYGNTSAGTLPLCIWDFEKKLKKGDNLIFTAFGAGFAWGAVYVKWGYDPKEDA.

Active-site residues include Cys-116 and His-256. Residues 257–261 (QANQR) form an ACP-binding region. Residue Asn-286 is part of the active site.

Belongs to the thiolase-like superfamily. FabH family. Homodimer.

It localises to the cytoplasm. It catalyses the reaction malonyl-[ACP] + acetyl-CoA + H(+) = 3-oxobutanoyl-[ACP] + CO2 + CoA. It functions in the pathway lipid metabolism; fatty acid biosynthesis. In terms of biological role, catalyzes the condensation reaction of fatty acid synthesis by the addition to an acyl acceptor of two carbons from malonyl-ACP. Catalyzes the first condensation reaction which initiates fatty acid synthesis and may therefore play a role in governing the total rate of fatty acid production. Possesses both acetoacetyl-ACP synthase and acetyl transacylase activities. Its substrate specificity determines the biosynthesis of branched-chain and/or straight-chain of fatty acids. The chain is Beta-ketoacyl-[acyl-carrier-protein] synthase III 1 from Bacteroides thetaiotaomicron (strain ATCC 29148 / DSM 2079 / JCM 5827 / CCUG 10774 / NCTC 10582 / VPI-5482 / E50).